Consider the following 218-residue polypeptide: Thiopurine S-methyltransferase (218 aa).

Residues Trp-10, Leu-45, Glu-66, and Arg-123 each contribute to the S-adenosyl-L-methionine site.

The protein belongs to the class I-like SAM-binding methyltransferase superfamily. TPMT family.

The protein resides in the cytoplasm. The catalysed reaction is S-adenosyl-L-methionine + a thiopurine = S-adenosyl-L-homocysteine + a thiopurine S-methylether.. In Xanthomonas campestris pv. campestris (strain 8004), this protein is Thiopurine S-methyltransferase.